Reading from the N-terminus, the 217-residue chain is Probable chemoreceptor glutamine deamidase CheD (217 aa).

The disordered stretch occupies residues 194–217; that stretch reads ATSGTAPSRGGELFTRASASRTPS.

The protein belongs to the CheD family.

The enzyme catalyses L-glutaminyl-[protein] + H2O = L-glutamyl-[protein] + NH4(+). Functionally, probably deamidates glutamine residues to glutamate on methyl-accepting chemotaxis receptors (MCPs), playing an important role in chemotaxis. The protein is Probable chemoreceptor glutamine deamidase CheD of Cupriavidus pinatubonensis (strain JMP 134 / LMG 1197) (Cupriavidus necator (strain JMP 134)).